Here is a 127-residue protein sequence, read N- to C-terminus: Small ribosomal subunit protein uS13 (127 aa).

The interval 90 to 127 (RRHRQGLPVRGQRTRTNARTRRGRRVTVAGKKKAPSKK) is disordered. Positions 101–127 (QRTRTNARTRRGRRVTVAGKKKAPSKK) are enriched in basic residues.

This sequence belongs to the universal ribosomal protein uS13 family. Part of the 30S ribosomal subunit. Forms a loose heterodimer with protein S19. Forms two bridges to the 50S subunit in the 70S ribosome.

In terms of biological role, located at the top of the head of the 30S subunit, it contacts several helices of the 16S rRNA. In the 70S ribosome it contacts the 23S rRNA (bridge B1a) and protein L5 of the 50S subunit (bridge B1b), connecting the 2 subunits; these bridges are implicated in subunit movement. Contacts the tRNAs in the A and P-sites. The polypeptide is Small ribosomal subunit protein uS13 (Rippkaea orientalis (strain PCC 8801 / RF-1) (Cyanothece sp. (strain PCC 8801))).